Consider the following 613-residue polypeptide: Ethylene response sensor 1 (613 aa).

3 consecutive transmembrane segments (helical) span residues 23–43 (ISDA…IYFV), 58–78 (FGAF…MFFM), and 95–115 (AVVS…LLSV). Positions 65 and 69 each coordinate Cu cation. One can recognise a GAF domain in the interval 158–307 (DRHTILRTTL…NVADQVAVAL (150 aa)). One can recognise a Histidine kinase domain in the interval 350 to 589 (VMNHEMRTPM…SFIIRLGICN (240 aa)). Histidine 353 bears the Phosphohistidine; by autocatalysis mark.

This sequence belongs to the ethylene receptor family. Homodimer; disulfide-linked. Heteromer with ETR1. It depends on Cu cation as a cofactor. In terms of processing, autophosphorylated on both His and Ser residues in the presence of manganese. Loss of His autophosphorylation in the presence of both manganese and magnesium. As to expression, expressed in etiolated seedlings, leaves, stems, roots, flowers, embryos, anthers, carpels and ovules.

It is found in the endoplasmic reticulum membrane. The enzyme catalyses ATP + protein L-histidine = ADP + protein N-phospho-L-histidine.. Its function is as follows. Ethylene receptor related to bacterial two-component regulators. Acts as a redundant negative regulator of ethylene signaling. This chain is Ethylene response sensor 1 (ERS1), found in Arabidopsis thaliana (Mouse-ear cress).